Reading from the N-terminus, the 324-residue chain is Probable carboxylesterase 9 (324 aa).

An Involved in the stabilization of the negatively charged intermediate by the formation of the oxyanion hole motif is present at residues histidine 86–serine 88. Active-site residues include serine 171, aspartate 272, and histidine 302.

Belongs to the 'GDXG' lipolytic enzyme family. In terms of tissue distribution, expressed in flowers.

The catalysed reaction is a carboxylic ester + H2O = an alcohol + a carboxylate + H(+). In terms of biological role, carboxylesterase acting on esters with varying acyl chain length. The protein is Probable carboxylesterase 9 (CXE9) of Arabidopsis thaliana (Mouse-ear cress).